A 306-amino-acid polypeptide reads, in one-letter code: Homoserine kinase (306 aa).

Residue 90 to 100 (PLARGLGSSAS) participates in ATP binding.

Belongs to the GHMP kinase family. Homoserine kinase subfamily.

It localises to the cytoplasm. It carries out the reaction L-homoserine + ATP = O-phospho-L-homoserine + ADP + H(+). The protein operates within amino-acid biosynthesis; L-threonine biosynthesis; L-threonine from L-aspartate: step 4/5. Functionally, catalyzes the ATP-dependent phosphorylation of L-homoserine to L-homoserine phosphate. This Staphylococcus epidermidis (strain ATCC 35984 / DSM 28319 / BCRC 17069 / CCUG 31568 / BM 3577 / RP62A) protein is Homoserine kinase.